A 230-amino-acid chain; its full sequence is Transmembrane protein 225 (230 aa).

Residues 1–8 (MMHIPNRS) lie on the Cytoplasmic side of the membrane. The chain crosses the membrane as a helical span at residues 9 to 29 (IQAANIFFSSGAILLLIVGLI). Residues 30–71 (MEDWVELIPKVRKDKTTHSPWLGCCPPFWPEESLEVVRRIMR) are Extracellular-facing. A helical membrane pass occupies residues 72–92 (MTLNISIYLNLIIGLQFSYMI). Over 93-99 (SQNKCVH) the chain is Cytoplasmic. A helical membrane pass occupies residues 100–120 (LLVGFLSFFAGCLLFYAIIVY). At 121–139 (HHKLNKGQYVYFVNYKTKW) the chain is on the extracellular side. A helical membrane pass occupies residues 140–160 (IAFTVYLTIALFLTCGIFCFI). The Cytoplasmic portion of the chain corresponds to 161 to 230 (QSTNRCECMK…TQARRVTWAL (70 aa)). The RVxF motif lies at 224–228 (RRVTW).

As to quaternary structure, interacts (via RVxF motif) with PPP1CC. As to expression, expressed in testis, epididymis and spermatozoa (at protein level). Not expressed in brain, heart, lung, liver, spleen, kidney and skeletal muscle.

It is found in the cytoplasmic vesicle. It localises to the secretory vesicle. The protein resides in the acrosome membrane. Probably inhibits protein phosphatase 1 (PP1) in sperm via binding to catalytic subunit PPP1CC. The chain is Transmembrane protein 225 (Tmem225) from Mus musculus (Mouse).